The primary structure comprises 145 residues: Prolactin-inducible protein homolog (145 aa).

The N-terminal stretch at 1–28 (MYSLHLLLRASPAALLLILCLQLGTTKA) is a signal peptide. Pyrrolidone carboxylic acid is present on Gln29. 2 cysteine pairs are disulfide-bonded: Cys66/Cys92 and Cys90/Cys124. Asn106 carries an N-linked (GlcNAc...) asparagine glycan.

It belongs to the PIP family. Monomer. Interacts with AZGP1.

It localises to the secreted. The polypeptide is Prolactin-inducible protein homolog (PIP) (Bos taurus (Bovine)).